Here is a 245-residue protein sequence, read N- to C-terminus: 1-(5-phosphoribosyl)-5-[(5-phosphoribosylamino)methylideneamino] imidazole-4-carboxamide isomerase (245 aa).

The Proton acceptor role is filled by Asp7. The active-site Proton donor is Asp129.

The protein belongs to the HisA/HisF family.

The protein localises to the cytoplasm. The enzyme catalyses 1-(5-phospho-beta-D-ribosyl)-5-[(5-phospho-beta-D-ribosylamino)methylideneamino]imidazole-4-carboxamide = 5-[(5-phospho-1-deoxy-D-ribulos-1-ylimino)methylamino]-1-(5-phospho-beta-D-ribosyl)imidazole-4-carboxamide. It participates in amino-acid biosynthesis; L-histidine biosynthesis; L-histidine from 5-phospho-alpha-D-ribose 1-diphosphate: step 4/9. This chain is 1-(5-phosphoribosyl)-5-[(5-phosphoribosylamino)methylideneamino] imidazole-4-carboxamide isomerase, found in Shewanella sp. (strain MR-7).